The following is a 187-amino-acid chain: Orotate phosphoribosyltransferase (187 aa).

5-phospho-alpha-D-ribose 1-diphosphate is bound by residues Arg98, Lys99, Lys102, His104, and 128 to 136 (EDVTTTGGS). Thr132 and Arg160 together coordinate orotate.

It belongs to the purine/pyrimidine phosphoribosyltransferase family. PyrE subfamily. As to quaternary structure, homodimer. The cofactor is Mg(2+).

The catalysed reaction is orotidine 5'-phosphate + diphosphate = orotate + 5-phospho-alpha-D-ribose 1-diphosphate. Its pathway is pyrimidine metabolism; UMP biosynthesis via de novo pathway; UMP from orotate: step 1/2. Its function is as follows. Catalyzes the transfer of a ribosyl phosphate group from 5-phosphoribose 1-diphosphate to orotate, leading to the formation of orotidine monophosphate (OMP). The polypeptide is Orotate phosphoribosyltransferase (Rhodopseudomonas palustris (strain BisB5)).